Here is a 405-residue protein sequence, read N- to C-terminus: uncharacterized protein (405 aa).

Disordered regions lie at residues 1 to 21 (MSKK…ESKT), 150 to 179 (IKDE…QEGP), and 285 to 405 (DDED…KSRS). The segment covering 7-16 (KNASPKNNSD) has biased composition (polar residues). Composition is skewed to acidic residues over residues 312 to 331 (SDDE…DDEE) and 349 to 358 (DDEDDEEEGE). Basic residues-rich tracts occupy residues 365 to 374 (SSKKSSKKAS) and 390 to 405 (PKKK…KSRS).

This is an uncharacterized protein from Acanthamoeba polyphaga (Amoeba).